The chain runs to 422 residues: Trichothecene biosynthesis transcription regulator TRI10 (422 aa).

Belongs to the TRI10 transcription regulator family.

The protein localises to the nucleus. In terms of biological role, transcriptional activator of all of the trichothecene biosynthesis genes. Acts upstream of the cluster-encoded transcription factor TRI6 and is necessary for full expression of both the other trichothecene genes and the genes for the primary metabolic pathway that precedes the trichothecene biosynthetic pathway. This chain is Trichothecene biosynthesis transcription regulator TRI10, found in Trichoderma arundinaceum.